The chain runs to 165 residues: Xanthine-guanine phosphoribosyltransferase (165 aa).

5-phospho-alpha-D-ribose 1-diphosphate contacts are provided by residues 41 to 42 (RG) and 98 to 106 (DDLTDTGKT). Aspartate 99 serves as a coordination point for Mg(2+). Residues aspartate 102 and isoleucine 145 each contribute to the guanine site. 2 residues coordinate xanthine: aspartate 102 and isoleucine 145. GMP-binding positions include 102–106 (DTGKT) and 144–145 (WI).

Belongs to the purine/pyrimidine phosphoribosyltransferase family. XGPT subfamily. In terms of assembly, homotetramer. It depends on Mg(2+) as a cofactor.

It is found in the cell inner membrane. It catalyses the reaction GMP + diphosphate = guanine + 5-phospho-alpha-D-ribose 1-diphosphate. The catalysed reaction is XMP + diphosphate = xanthine + 5-phospho-alpha-D-ribose 1-diphosphate. It carries out the reaction IMP + diphosphate = hypoxanthine + 5-phospho-alpha-D-ribose 1-diphosphate. Its pathway is purine metabolism; GMP biosynthesis via salvage pathway; GMP from guanine: step 1/1. The protein operates within purine metabolism; XMP biosynthesis via salvage pathway; XMP from xanthine: step 1/1. Its function is as follows. Purine salvage pathway enzyme that catalyzes the transfer of the ribosyl-5-phosphate group from 5-phospho-alpha-D-ribose 1-diphosphate (PRPP) to the N9 position of the 6-oxopurines guanine and xanthine to form the corresponding ribonucleotides GMP (guanosine 5'-monophosphate) and XMP (xanthosine 5'-monophosphate), with the release of PPi. To a lesser extent, also acts on hypoxanthine. This is Xanthine-guanine phosphoribosyltransferase from Brucella canis (strain ATCC 23365 / NCTC 10854 / RM-666).